We begin with the raw amino-acid sequence, 474 residues long: MAYSATQSKSGYQAGVKDYRLTYYTPDYTPKDTDVLACFRVTPQPGVPPEEAGAAVAAESSTGTWTTVWTDLLTDLDRYKGRCYDIEPVPGEDNQYFCFVAYPLDLFEEGSVTNMLTSIVGNVFGFKALKALRLEDVRIPVAYLKTFQGPPHGIQVERDKLNKYGRPLLGCTIKPKLGLSAKNYGRAVYEALRGGLDFTKDDENINSQPFQRWRDRYLFVMEAVHKAQAETGEIKGHYLNVTAPTCEEMFKRAEFAKELGAPIIMHDYLTAGFTANTSLAKWCRDNGILLHIHRAMHAVIDRQKNHGIHFRVLAKCLRMSGGDHLHSGTVVGKLEGDRAITMGFVDLMRENYVEADRSRGIFFTQDWASMPGVMPVASGGIHVWHMPALVEIFGDDSVLQFGGGTLGHPWGNAPGATANRVALEACIQARNEGRDLAREGNDIIREAAKWSPELAAACELWKEIKFEFKAVDTL.

Substrate is bound by residues N122 and T172. Catalysis depends on K174, which acts as the Proton acceptor. A substrate-binding site is contributed by K176. Mg(2+) is bound by residues K200, D202, and E203. At K200 the chain carries N6-carboxylysine. H293 functions as the Proton acceptor in the catalytic mechanism. Substrate contacts are provided by R294, H326, and S378.

The protein belongs to the RuBisCO large chain family. Type I subfamily. As to quaternary structure, heterohexadecamer of 8 large chains and 8 small chains; disulfide-linked. The disulfide link is formed within the large subunit homodimers. The cofactor is Mg(2+). Post-translationally, the disulfide bond which can form in the large chain dimeric partners within the hexadecamer appears to be associated with oxidative stress and protein turnover.

The protein resides in the carboxysome. It carries out the reaction 2 (2R)-3-phosphoglycerate + 2 H(+) = D-ribulose 1,5-bisphosphate + CO2 + H2O. The catalysed reaction is D-ribulose 1,5-bisphosphate + O2 = 2-phosphoglycolate + (2R)-3-phosphoglycerate + 2 H(+). Functionally, ruBisCO catalyzes two reactions: the carboxylation of D-ribulose 1,5-bisphosphate, the primary event in carbon dioxide fixation, as well as the oxidative fragmentation of the pentose substrate in the photorespiration process. Both reactions occur simultaneously and in competition at the same active site. The polypeptide is Ribulose bisphosphate carboxylase large chain (Synechococcus sp. (strain JA-2-3B'a(2-13)) (Cyanobacteria bacterium Yellowstone B-Prime)).